The chain runs to 252 residues: 2-succinyl-6-hydroxy-2,4-cyclohexadiene-1-carboxylate synthase (252 aa).

It belongs to the AB hydrolase superfamily. MenH family. Monomer.

It carries out the reaction 5-enolpyruvoyl-6-hydroxy-2-succinyl-cyclohex-3-ene-1-carboxylate = (1R,6R)-6-hydroxy-2-succinyl-cyclohexa-2,4-diene-1-carboxylate + pyruvate. Its pathway is quinol/quinone metabolism; 1,4-dihydroxy-2-naphthoate biosynthesis; 1,4-dihydroxy-2-naphthoate from chorismate: step 3/7. It functions in the pathway quinol/quinone metabolism; menaquinone biosynthesis. Its function is as follows. Catalyzes a proton abstraction reaction that results in 2,5-elimination of pyruvate from 2-succinyl-5-enolpyruvyl-6-hydroxy-3-cyclohexene-1-carboxylate (SEPHCHC) and the formation of 2-succinyl-6-hydroxy-2,4-cyclohexadiene-1-carboxylate (SHCHC). In Klebsiella pneumoniae (strain 342), this protein is 2-succinyl-6-hydroxy-2,4-cyclohexadiene-1-carboxylate synthase.